Reading from the N-terminus, the 485-residue chain is Glutamyl-tRNA(Gln) amidotransferase subunit A (485 aa).

Catalysis depends on charge relay system residues Lys-80 and Ser-155. Catalysis depends on Ser-179, which acts as the Acyl-ester intermediate.

The protein belongs to the amidase family. GatA subfamily. In terms of assembly, heterotrimer of A, B and C subunits.

It catalyses the reaction L-glutamyl-tRNA(Gln) + L-glutamine + ATP + H2O = L-glutaminyl-tRNA(Gln) + L-glutamate + ADP + phosphate + H(+). Its function is as follows. Allows the formation of correctly charged Gln-tRNA(Gln) through the transamidation of misacylated Glu-tRNA(Gln) in organisms which lack glutaminyl-tRNA synthetase. The reaction takes place in the presence of glutamine and ATP through an activated gamma-phospho-Glu-tRNA(Gln). The polypeptide is Glutamyl-tRNA(Gln) amidotransferase subunit A (Leptospira borgpetersenii serovar Hardjo-bovis (strain L550)).